The sequence spans 190 residues: Peptidyl-tRNA hydrolase (190 aa).

Tyr14 contributes to the tRNA binding site. His19 acts as the Proton acceptor in catalysis. Positions 63, 65, and 112 each coordinate tRNA.

Belongs to the PTH family. As to quaternary structure, monomer.

The protein resides in the cytoplasm. The catalysed reaction is an N-acyl-L-alpha-aminoacyl-tRNA + H2O = an N-acyl-L-amino acid + a tRNA + H(+). Hydrolyzes ribosome-free peptidyl-tRNAs (with 1 or more amino acids incorporated), which drop off the ribosome during protein synthesis, or as a result of ribosome stalling. Functionally, catalyzes the release of premature peptidyl moieties from peptidyl-tRNA molecules trapped in stalled 50S ribosomal subunits, and thus maintains levels of free tRNAs and 50S ribosomes. The protein is Peptidyl-tRNA hydrolase of Kosmotoga olearia (strain ATCC BAA-1733 / DSM 21960 / TBF 19.5.1).